Here is a 264-residue protein sequence, read N- to C-terminus: Thymidylate synthase (264 aa).

DUMP-binding positions include arginine 21 and arginine 126–arginine 127. Residue cysteine 146 is the Nucleophile of the active site. DUMP contacts are provided by residues arginine 166–aspartate 169, asparagine 177, and histidine 207–tyrosine 209. Aspartate 169 contributes to the (6R)-5,10-methylene-5,6,7,8-tetrahydrofolate binding site. (6R)-5,10-methylene-5,6,7,8-tetrahydrofolate is bound at residue alanine 263.

The protein belongs to the thymidylate synthase family. Bacterial-type ThyA subfamily. As to quaternary structure, homodimer.

It localises to the cytoplasm. It carries out the reaction dUMP + (6R)-5,10-methylene-5,6,7,8-tetrahydrofolate = 7,8-dihydrofolate + dTMP. It functions in the pathway pyrimidine metabolism; dTTP biosynthesis. Catalyzes the reductive methylation of 2'-deoxyuridine-5'-monophosphate (dUMP) to 2'-deoxythymidine-5'-monophosphate (dTMP) while utilizing 5,10-methylenetetrahydrofolate (mTHF) as the methyl donor and reductant in the reaction, yielding dihydrofolate (DHF) as a by-product. This enzymatic reaction provides an intracellular de novo source of dTMP, an essential precursor for DNA biosynthesis. The protein is Thymidylate synthase of Bradyrhizobium diazoefficiens (strain JCM 10833 / BCRC 13528 / IAM 13628 / NBRC 14792 / USDA 110).